Here is a 254-residue protein sequence, read N- to C-terminus: Syntaxin-6 (254 aa).

Residues 1-233 (MSMEDPFFVV…VSHMTSDRRQ (233 aa)) lie on the Cytoplasmic side of the membrane. A coiled-coil region spans residues 46–72 (TTNELRNNLRSIEWDLEDLDETISIVE). The interval 103 to 138 (KDQMSNSSMQALAERKNRQALLGESSSQSWSSGPDK) is disordered. The region spanning 162 to 224 (QLIVEQQDEQ…DNVMKKLAKV (63 aa)) is the t-SNARE coiled-coil homology domain. Residues 234 to 254 (WCAIIVLFVILLVVLVLFLVL) form a helical; Anchor for type IV membrane protein membrane-spanning segment.

The protein belongs to the syntaxin family.

Its subcellular location is the golgi apparatus membrane. The protein localises to the golgi apparatus. It is found in the trans-Golgi network membrane. The protein resides in the recycling endosome membrane. In terms of biological role, SNARE promoting movement of transport vesicles to target membranes. Targets endosomes to the trans-Golgi network, and may therefore function in retrograde trafficking. Together with SNARE STX12, promotes movement of vesicles from endosomes to the cell membrane, and may therefore function in the endocytic recycling pathway. The protein is Syntaxin-6 (STX6) of Gallus gallus (Chicken).